The following is a 374-amino-acid chain: Large ribosomal subunit protein uL4 (374 aa).

The disordered stretch occupies residues 336–355; sequence EKAMAKGMQNKKNREARHAA.

It belongs to the universal ribosomal protein uL4 family.

The sequence is that of Large ribosomal subunit protein uL4 (RPL4) from Trypanosoma brucei brucei.